A 305-amino-acid polypeptide reads, in one-letter code: tRNA pseudouridine synthase B (305 aa).

The active-site Nucleophile is Asp48.

It belongs to the pseudouridine synthase TruB family. Type 1 subfamily.

The enzyme catalyses uridine(55) in tRNA = pseudouridine(55) in tRNA. Its function is as follows. Responsible for synthesis of pseudouridine from uracil-55 in the psi GC loop of transfer RNAs. This chain is tRNA pseudouridine synthase B, found in Pseudomonas syringae pv. syringae (strain B728a).